The chain runs to 124 residues: Small ribosomal subunit protein uS12 (124 aa).

Asp-89 bears the 3-methylthioaspartic acid mark. The segment at 105–124 (AGVKDRRQSRSKYGAKRPKA) is disordered. Basic residues predominate over residues 113-124 (SRSKYGAKRPKA).

This sequence belongs to the universal ribosomal protein uS12 family. In terms of assembly, part of the 30S ribosomal subunit. Contacts proteins S8 and S17. May interact with IF1 in the 30S initiation complex.

With S4 and S5 plays an important role in translational accuracy. Its function is as follows. Interacts with and stabilizes bases of the 16S rRNA that are involved in tRNA selection in the A site and with the mRNA backbone. Located at the interface of the 30S and 50S subunits, it traverses the body of the 30S subunit contacting proteins on the other side and probably holding the rRNA structure together. The combined cluster of proteins S8, S12 and S17 appears to hold together the shoulder and platform of the 30S subunit. The chain is Small ribosomal subunit protein uS12 (rpsL) from Synechococcus elongatus (strain ATCC 33912 / PCC 7942 / FACHB-805) (Anacystis nidulans R2).